Here is a 337-residue protein sequence, read N- to C-terminus: RNA 3'-terminal phosphate cyclase (337 aa).

Residues glutamine 100 and 281-285 contribute to the ATP site; that span reads YMGDQ. The Tele-AMP-histidine intermediate role is filled by histidine 306.

It belongs to the RNA 3'-terminal cyclase family. Type 1 subfamily.

The protein localises to the cytoplasm. The enzyme catalyses a 3'-end 3'-phospho-ribonucleotide-RNA + ATP = a 3'-end 2',3'-cyclophospho-ribonucleotide-RNA + AMP + diphosphate. Its function is as follows. Catalyzes the conversion of 3'-phosphate to a 2',3'-cyclic phosphodiester at the end of RNA. The mechanism of action of the enzyme occurs in 3 steps: (A) adenylation of the enzyme by ATP; (B) transfer of adenylate to an RNA-N3'P to produce RNA-N3'PP5'A; (C) and attack of the adjacent 2'-hydroxyl on the 3'-phosphorus in the diester linkage to produce the cyclic end product. The biological role of this enzyme is unknown but it is likely to function in some aspects of cellular RNA processing. The sequence is that of RNA 3'-terminal phosphate cyclase (rtcA) from Methanothermobacter thermautotrophicus (strain ATCC 29096 / DSM 1053 / JCM 10044 / NBRC 100330 / Delta H) (Methanobacterium thermoautotrophicum).